The sequence spans 85 residues: Cell division topological specificity factor (85 aa).

Belongs to the MinE family.

Prevents the cell division inhibition by proteins MinC and MinD at internal division sites while permitting inhibition at polar sites. This ensures cell division at the proper site by restricting the formation of a division septum at the midpoint of the long axis of the cell. The protein is Cell division topological specificity factor of Chromobacterium violaceum (strain ATCC 12472 / DSM 30191 / JCM 1249 / CCUG 213 / NBRC 12614 / NCIMB 9131 / NCTC 9757 / MK).